We begin with the raw amino-acid sequence, 201 residues long: Ubiquitin-conjugating enzyme E2 E2 (201 aa).

The span at 1 to 10 (MSTEAQRVDD) shows a compositional bias: basic and acidic residues. Residues 1–55 (MSTEAQRVDDSPSTSGGSSDGDQRESVQQEPEREQVQPKKKEGKISSKTAAKLST) form a disordered region. Ser-2 is subject to N-acetylserine. Ser-11, Ser-15, Ser-18, and Ser-19 each carry phosphoserine. Residues 21–45 (GDQRESVQQEPEREQVQPKKKEGKI) show a composition bias toward basic and acidic residues. Residues 46-55 (SSKTAAKLST) show a composition bias toward low complexity. A UBC core domain is found at 55–201 (TSAKRIQKEL…ARQWTKRYAT (147 aa)). Catalysis depends on Cys-139, which acts as the Glycyl thioester intermediate.

This sequence belongs to the ubiquitin-conjugating enzyme family. Autoubiquitinated in vitro.

It carries out the reaction S-ubiquitinyl-[E1 ubiquitin-activating enzyme]-L-cysteine + [E2 ubiquitin-conjugating enzyme]-L-cysteine = [E1 ubiquitin-activating enzyme]-L-cysteine + S-ubiquitinyl-[E2 ubiquitin-conjugating enzyme]-L-cysteine.. It functions in the pathway protein modification; protein ubiquitination. Functionally, accepts ubiquitin from the E1 complex and catalyzes its covalent attachment to other proteins. In vitro catalyzes 'Lys-11'- and 'Lys-48'-, as well as 'Lys-63'-linked polyubiquitination. Catalyzes the ISGylation of influenza A virus NS1 protein. This Homo sapiens (Human) protein is Ubiquitin-conjugating enzyme E2 E2.